A 139-amino-acid chain; its full sequence is ATP synthase epsilon chain (139 aa).

This sequence belongs to the ATPase epsilon chain family. As to quaternary structure, F-type ATPases have 2 components, CF(1) - the catalytic core - and CF(0) - the membrane proton channel. CF(1) has five subunits: alpha(3), beta(3), gamma(1), delta(1), epsilon(1). CF(0) has three main subunits: a, b and c.

The protein resides in the cell membrane. Its function is as follows. Produces ATP from ADP in the presence of a proton gradient across the membrane. The protein is ATP synthase epsilon chain of Ligilactobacillus salivarius (strain UCC118) (Lactobacillus salivarius).